The following is a 39-amino-acid chain: Photosystem II reaction center protein X (39 aa).

Residues 10–30 (WSLVLGAAIVLIPATIGLIFI) traverse the membrane as a helical segment.

Belongs to the PsbX family. Type 1 subfamily. In terms of assembly, PSII is composed of 1 copy each of membrane proteins PsbA, PsbB, PsbC, PsbD, PsbE, PsbF, PsbH, PsbI, PsbJ, PsbK, PsbL, PsbM, PsbT, PsbX, PsbY, PsbZ, Psb30/Ycf12, peripheral proteins PsbO, CyanoQ (PsbQ), PsbU, PsbV and a large number of cofactors. It forms dimeric complexes.

The protein localises to the cellular thylakoid membrane. Functionally, involved in the binding and/or turnover of quinones at the Q(B) site of photosystem II (PSII). PSII is a light-driven water plastoquinone oxidoreductase, using light energy to abstract electrons from H(2)O, generating a proton gradient subsequently used for ATP formation. This is Photosystem II reaction center protein X from Microcystis aeruginosa (strain NIES-843 / IAM M-2473).